Reading from the N-terminus, the 122-residue chain is Large ribosomal subunit protein uL14 (122 aa).

This sequence belongs to the universal ribosomal protein uL14 family. In terms of assembly, part of the 50S ribosomal subunit. Forms a cluster with proteins L3 and L19. In the 70S ribosome, L14 and L19 interact and together make contacts with the 16S rRNA in bridges B5 and B8.

Functionally, binds to 23S rRNA. Forms part of two intersubunit bridges in the 70S ribosome. This Thermus aquaticus protein is Large ribosomal subunit protein uL14.